Here is a 324-residue protein sequence, read N- to C-terminus: Olfactory receptor 11H4 (324 aa).

Over 1–35 (MSFFFVDLRPMNRSATHIVTEFILLGFPGCWKIQI) the chain is Extracellular. N-linked (GlcNAc...) asparagine glycosylation occurs at asparagine 12. Residues 36 to 56 (FLFSLFLVIYVLTLLGNGAII) traverse the membrane as a helical segment. Over 57–64 (YAVRCNPL) the chain is Cytoplasmic. Residues 65–85 (LHTPMYFLLGNFAFLEIWYVS) traverse the membrane as a helical segment. Over 86-109 (STIPNMLVNILSKTKAISFSGCFL) the chain is Extracellular. Cysteine 107 and cysteine 199 are oxidised to a cystine. Residues 110–130 (QFYFFFSLGTTECLFLAVMAY) traverse the membrane as a helical segment. Residues 131–149 (DRYLAICHPLQYPAIMTVR) are Cytoplasmic-facing. Residues 150–170 (FCGKLVSFCWLIGFLGYPIPI) form a helical membrane-spanning segment. At 171–207 (FYISQLPFCGPNIIDHFLCDMDPLMALSCAPAPITEC) the chain is on the extracellular side. A helical membrane pass occupies residues 208–227 (IFYTQSSLVLFFTSMYILRS). Over 228–247 (YILLLTAVFQVPSAAGRRKA) the chain is Cytoplasmic. The helical transmembrane segment at 248–268 (FSTCGSHLVVVSLFYGTVMVM) threads the bilayer. At 269 to 281 (YVSPTYGIPTLLQ) the chain is on the extracellular side. Residues 282–302 (KILTLVYSVTTPLFNPLIYTL) form a helical membrane-spanning segment. At 303–324 (RNKDMKLALRNVLFGMRIRQNS) the chain is on the cytoplasmic side.

Belongs to the G-protein coupled receptor 1 family.

Its subcellular location is the cell membrane. In terms of biological role, odorant receptor. The chain is Olfactory receptor 11H4 (OR11H4) from Homo sapiens (Human).